A 178-amino-acid chain; its full sequence is Large ribosomal subunit protein uL6 (178 aa).

Belongs to the universal ribosomal protein uL6 family. In terms of assembly, part of the 50S ribosomal subunit.

Its function is as follows. This protein binds to the 23S rRNA, and is important in its secondary structure. It is located near the subunit interface in the base of the L7/L12 stalk, and near the tRNA binding site of the peptidyltransferase center. The polypeptide is Large ribosomal subunit protein uL6 (Campylobacter curvus (strain 525.92)).